The following is a 475-amino-acid chain: Aspartyl/glutamyl-tRNA(Asn/Gln) amidotransferase subunit B (475 aa).

This sequence belongs to the GatB/GatE family. GatB subfamily. In terms of assembly, heterotrimer of A, B and C subunits.

It catalyses the reaction L-glutamyl-tRNA(Gln) + L-glutamine + ATP + H2O = L-glutaminyl-tRNA(Gln) + L-glutamate + ADP + phosphate + H(+). The catalysed reaction is L-aspartyl-tRNA(Asn) + L-glutamine + ATP + H2O = L-asparaginyl-tRNA(Asn) + L-glutamate + ADP + phosphate + 2 H(+). Functionally, allows the formation of correctly charged Asn-tRNA(Asn) or Gln-tRNA(Gln) through the transamidation of misacylated Asp-tRNA(Asn) or Glu-tRNA(Gln) in organisms which lack either or both of asparaginyl-tRNA or glutaminyl-tRNA synthetases. The reaction takes place in the presence of glutamine and ATP through an activated phospho-Asp-tRNA(Asn) or phospho-Glu-tRNA(Gln). The chain is Aspartyl/glutamyl-tRNA(Asn/Gln) amidotransferase subunit B from Thermoanaerobacter pseudethanolicus (strain ATCC 33223 / 39E) (Clostridium thermohydrosulfuricum).